The sequence spans 54 residues: Kazal-type inhibitor-like protein (54 aa).

The region spanning 1–54 (MKVNCKGYPTKFCFGKPLPHCASDGKTYPNRCRFCNAFVKSHGLITLRYYGKCK) is the Kazal-like domain. 3 cysteine pairs are disulfide-bonded: C5–C35, C13–C32, and C21–C53.

In terms of assembly, may form disulfide-linked dimers or trimers (in vitro). In terms of tissue distribution, expressed by the venom gland.

It is found in the secreted. Its function is as follows. Partially inhibits trypsin in vitro at slightly acidic pH and concentrations in excess of 0.3 mM. Has no protease inhibitory activity at neutral or basic pH. Has no antibacterial activity. Shows no toxicity in vertebrates apart from transient paw edema in mouse. This Bothriechis schlegelii (Eyelash palm pitviper) protein is Kazal-type inhibitor-like protein.